We begin with the raw amino-acid sequence, 577 residues long: Acyl-coenzyme A synthetase ACSM2A, mitochondrial (577 aa).

Residues 1–46 (MHWLRKVQGLCTLWGTQMSSRTLYINSRQLVSLQWGHQEVPAKFNF) constitute a mitochondrion transit peptide. Q139 is a CoA binding site. Residues 221-229 (TSGTSGLPK), 359-364 (ESYGQT), D446, and R461 contribute to the ATP site. A substrate-binding site is contributed by T364. 469–471 (SGY) contacts CoA. Position 472 (R472) interacts with substrate. R501 lines the CoA pocket. S513 is modified (phosphoserine). CoA is bound by residues K532 and 540–542 (YPR). K557 lines the ATP pocket.

It belongs to the ATP-dependent AMP-binding enzyme family. Monomer. Mg(2+) is required as a cofactor. Requires Mn(2+) as cofactor.

It localises to the mitochondrion. The enzyme catalyses a medium-chain fatty acid + ATP + CoA = a medium-chain fatty acyl-CoA + AMP + diphosphate. It carries out the reaction benzoate + ATP + CoA = benzoyl-CoA + AMP + diphosphate. The catalysed reaction is hexanoate + ATP + CoA = hexanoyl-CoA + AMP + diphosphate. It catalyses the reaction butanoate + ATP + CoA = butanoyl-CoA + AMP + diphosphate. The enzyme catalyses octanoate + ATP + CoA = octanoyl-CoA + AMP + diphosphate. It carries out the reaction decanoate + ATP + CoA = decanoyl-CoA + AMP + diphosphate. Functionally, catalyzes the activation of fatty acids by CoA to produce an acyl-CoA, the first step in fatty acid metabolism. Capable of activating medium-chain fatty acids (e.g. butyric (C4) to decanoic (C10) acids), and certain carboxylate-containing xenobiotics, e.g. benzoate. The chain is Acyl-coenzyme A synthetase ACSM2A, mitochondrial (ACSM2A) from Homo sapiens (Human).